The chain runs to 235 residues: UPF0173 metal-dependent hydrolase Oant_3663 (235 aa).

The protein belongs to the UPF0173 family.

In Brucella anthropi (strain ATCC 49188 / DSM 6882 / CCUG 24695 / JCM 21032 / LMG 3331 / NBRC 15819 / NCTC 12168 / Alc 37) (Ochrobactrum anthropi), this protein is UPF0173 metal-dependent hydrolase Oant_3663.